The sequence spans 300 residues: Small ribosomal subunit protein uS2 (300 aa).

A disordered region spans residues arginine 228–alanine 300. Residues alanine 258–alanine 300 are compositionally biased toward low complexity.

It belongs to the universal ribosomal protein uS2 family.

The chain is Small ribosomal subunit protein uS2 from Rhodococcus jostii (strain RHA1).